Reading from the N-terminus, the 296-residue chain is Acetylglutamate kinase (296 aa).

Substrate-binding positions include G69–G70, R91, and N193.

The protein belongs to the acetylglutamate kinase family. ArgB subfamily.

It is found in the cytoplasm. It carries out the reaction N-acetyl-L-glutamate + ATP = N-acetyl-L-glutamyl 5-phosphate + ADP. Its pathway is amino-acid biosynthesis; L-arginine biosynthesis; N(2)-acetyl-L-ornithine from L-glutamate: step 2/4. Functionally, catalyzes the ATP-dependent phosphorylation of N-acetyl-L-glutamate. The sequence is that of Acetylglutamate kinase from Paracidovorax citrulli (strain AAC00-1) (Acidovorax citrulli).